The primary structure comprises 182 residues: MFKYIGDIVKGTGTQLRSLVMIFGHGFRKRDTLQYPEEPVYLAPRYRGRIVLTRDPDGEERCVACNLCAVACPVGCISLQKAETEDGRWYPDFFRINFSRCIFCGLCEEACPTTAIQLTPDFEMAEFKRQDLVYEKEDLLISGPGKNPDYNFYRVAGMAIAGKPKGAAQNEAEPINVKSLLP.

2 4Fe-4S ferredoxin-type domains span residues leucine 52 to alanine 82 and aspartate 92 to aspartate 121. [4Fe-4S] cluster-binding residues include cysteine 62, cysteine 65, cysteine 68, cysteine 72, cysteine 101, cysteine 104, cysteine 107, and cysteine 111.

The protein belongs to the complex I 23 kDa subunit family. NDH-1 is composed of 13 different subunits. Subunits NuoA, H, J, K, L, M, N constitute the membrane sector of the complex. [4Fe-4S] cluster is required as a cofactor.

It is found in the cell inner membrane. The catalysed reaction is a quinone + NADH + 5 H(+)(in) = a quinol + NAD(+) + 4 H(+)(out). Its function is as follows. NDH-1 shuttles electrons from NADH, via FMN and iron-sulfur (Fe-S) centers, to quinones in the respiratory chain. The immediate electron acceptor for the enzyme in this species is believed to be ubiquinone. Couples the redox reaction to proton translocation (for every two electrons transferred, four hydrogen ions are translocated across the cytoplasmic membrane), and thus conserves the redox energy in a proton gradient. Required for plants roots colonization. This is NADH-quinone oxidoreductase subunit I (nuoI) from Pseudomonas fluorescens.